Reading from the N-terminus, the 416-residue chain is WD repeat-containing protein JIP5 (416 aa).

WD repeat units follow at residues 9 to 48 (PLSSDLFSQAIHPTEPLVSIGLSSGHVQTFHLPAPSENGK), 62 to 101 (RHKGSCRCVGFGIDGETLYSAGTDGWVKAARTETGRVEWK), and 112 to 151 (GFQVDSPCLIHALSPQTLLLATDSGALHLFDLRDRSTEVS). Positions 149 to 183 (EVSARPQQTHHPHDDYVSSLTPLPPSETSTSGYSK) are disordered. A compositionally biased stretch (low complexity) spans 166–179 (SSLTPLPPSETSTS). WD repeat units follow at residues 214 to 255 (ISSS…DQDE), 264 to 308 (DGGE…ISEL), and 309 to 348 (SHDDLEGVVGLGFDVQGRMISGGGTVVKVWHEAISDEEGN). 2 stretches are compositionally biased toward acidic residues: residues 343 to 359 (SDEEGNDDESDEEDIEN) and 374 to 383 (SDEEEDSDDD). The segment at 343-416 (SDEEGNDDES…VHVMAFKGLD (74 aa)) is disordered. A compositionally biased stretch (basic residues) spans 389 to 400 (KGKRKKRKRGKG).

The protein belongs to the WD repeat WDR55 family.

The protein localises to the nucleus. It localises to the nucleolus. The chain is WD repeat-containing protein JIP5 (JIP5) from Coccidioides immitis (strain RS) (Valley fever fungus).